The chain runs to 405 residues: Cytochrome P450 109 (405 aa).

Cysteine 351 serves as a coordination point for heme.

It belongs to the cytochrome P450 family. Heme is required as a cofactor.

Its function is as follows. Cytochromes P450 are a group of heme-thiolate monooxygenases. They oxidize a variety of structurally unrelated compounds, including steroids, fatty acids, and xenobiotics. In Bacillus spizizenii (strain ATCC 23059 / NRRL B-14472 / W23) (Bacillus subtilis subsp. spizizenii), this protein is Cytochrome P450 109 (cyp109).